The following is a 577-amino-acid chain: Arginine--tRNA ligase (577 aa).

Positions 122–132 match the 'HIGH' region motif; it reads PNVAKEMHVGH.

It belongs to the class-I aminoacyl-tRNA synthetase family. Monomer.

It is found in the cytoplasm. It carries out the reaction tRNA(Arg) + L-arginine + ATP = L-arginyl-tRNA(Arg) + AMP + diphosphate. This chain is Arginine--tRNA ligase, found in Salmonella paratyphi A (strain ATCC 9150 / SARB42).